Reading from the N-terminus, the 194-residue chain is MAKPEKVSAVAEITEQFKGSTAAVVTEYRGLSVGNITTLRRALGEGATYSVAKNTLVKRAAAEAGIEGLDDLFVGPTAIAFIKGEPVDAAKALKNFAKDNKALIIKGGYMDGAALSVEEVNKIADLESREILLAKLAGAMKGNLAKAAGLFNAPASQMARLAAALQEKKAAEGGAAEAPAEAATEAPAEAEAES.

A compositionally biased stretch (low complexity) spans 172–187; it reads EGGAAEAPAEAATEAP. Residues 172–194 form a disordered region; sequence EGGAAEAPAEAATEAPAEAEAES.

This sequence belongs to the universal ribosomal protein uL10 family. Part of the ribosomal stalk of the 50S ribosomal subunit. The N-terminus interacts with L11 and the large rRNA to form the base of the stalk. The C-terminus forms an elongated spine to which L12 dimers bind in a sequential fashion forming a multimeric L10(L12)X complex.

Forms part of the ribosomal stalk, playing a central role in the interaction of the ribosome with GTP-bound translation factors. The sequence is that of Large ribosomal subunit protein uL10 from Rhodococcus erythropolis (strain PR4 / NBRC 100887).